The sequence spans 455 residues: RQC trigger complex subunit RQT4 homolog (455 aa).

Disordered regions lie at residues 64-98 and 118-148; these read STHS…SHPS and PASR…GVMT. Polar residues-rich tracts occupy residues 65-98 and 119-130; these read THSG…SHPS and ASRNKSQSNNIS. Position 70 is a phosphoserine (S70). S380 bears the Phosphoserine mark.

Component of the RQT (ribosome quality control trigger) complex.

It is found in the cytoplasm. Its subcellular location is the cytosol. In terms of biological role, probably functions as part of the RQC trigger (RQT) complex that activates the ribosome quality control (RQC) pathway, a pathway that degrades nascent peptide chains during problematic translation. The polypeptide is RQC trigger complex subunit RQT4 homolog (Schizosaccharomyces pombe (strain 972 / ATCC 24843) (Fission yeast)).